The primary structure comprises 329 residues: Malate dehydrogenase (329 aa).

12-18 (GAAGQIG) serves as a coordination point for NAD(+). Substrate-binding residues include Arg95 and Arg101. Residues Asn108, Gln115, and 132–134 (VGN) contribute to the NAD(+) site. Substrate is bound by residues Asn134 and Arg165. Catalysis depends on His190, which acts as the Proton acceptor.

The protein belongs to the LDH/MDH superfamily. MDH type 2 family.

It catalyses the reaction (S)-malate + NAD(+) = oxaloacetate + NADH + H(+). Its function is as follows. Catalyzes the reversible oxidation of malate to oxaloacetate. This chain is Malate dehydrogenase, found in Bordetella petrii (strain ATCC BAA-461 / DSM 12804 / CCUG 43448).